The following is a 130-amino-acid chain: Small ribosomal subunit protein uS11 (130 aa).

The protein belongs to the universal ribosomal protein uS11 family. As to quaternary structure, part of the 30S ribosomal subunit. Interacts with proteins S7 and S18. Binds to IF-3.

Located on the platform of the 30S subunit, it bridges several disparate RNA helices of the 16S rRNA. Forms part of the Shine-Dalgarno cleft in the 70S ribosome. This Nautilia profundicola (strain ATCC BAA-1463 / DSM 18972 / AmH) protein is Small ribosomal subunit protein uS11.